A 265-amino-acid chain; its full sequence is Shikimate dehydrogenase (NADP(+)) (265 aa).

Shikimate contacts are provided by residues 14 to 16 and Thr61; that span reads SLS. The Proton acceptor role is filled by Lys65. Residues Asn85 and Asp100 each coordinate shikimate. Residues 123 to 127, 146 to 151, and Ala209 each bind NADP(+); these read GAGGA and NRTESK. Tyr211 provides a ligand contact to shikimate. Gly232 is a binding site for NADP(+).

This sequence belongs to the shikimate dehydrogenase family. As to quaternary structure, homodimer.

The enzyme catalyses shikimate + NADP(+) = 3-dehydroshikimate + NADPH + H(+). It functions in the pathway metabolic intermediate biosynthesis; chorismate biosynthesis; chorismate from D-erythrose 4-phosphate and phosphoenolpyruvate: step 4/7. Its function is as follows. Involved in the biosynthesis of the chorismate, which leads to the biosynthesis of aromatic amino acids. Catalyzes the reversible NADPH linked reduction of 3-dehydroshikimate (DHSA) to yield shikimate (SA). The polypeptide is Shikimate dehydrogenase (NADP(+)) (Haloarcula marismortui (strain ATCC 43049 / DSM 3752 / JCM 8966 / VKM B-1809) (Halobacterium marismortui)).